The sequence spans 373 residues: D-alanine--D-alanine ligase (373 aa).

The region spanning Lys156–Glu363 is the ATP-grasp domain. Cys184–Glu239 contacts ATP. 3 residues coordinate Mg(2+): Asp318, Glu330, and Asn332.

This sequence belongs to the D-alanine--D-alanine ligase family. Mg(2+) serves as cofactor. It depends on Mn(2+) as a cofactor.

Its subcellular location is the cytoplasm. The enzyme catalyses 2 D-alanine + ATP = D-alanyl-D-alanine + ADP + phosphate + H(+). It functions in the pathway cell wall biogenesis; peptidoglycan biosynthesis. Its function is as follows. Cell wall formation. The protein is D-alanine--D-alanine ligase of Mycobacterium tuberculosis (strain ATCC 25177 / H37Ra).